Reading from the N-terminus, the 165-residue chain is 2-C-methyl-D-erythritol 2,4-cyclodiphosphate synthase (165 aa).

Positions 9 and 11 each coordinate a divalent metal cation. 4-CDP-2-C-methyl-D-erythritol 2-phosphate contacts are provided by residues 9 to 11 and 35 to 36; these read DVH and HS. His43 is an a divalent metal cation binding site. 4-CDP-2-C-methyl-D-erythritol 2-phosphate is bound by residues 57-59, 101-107, 133-136, Phe140, and Arg143; these read DIG, AQAPKML, and TTTE.

The protein belongs to the IspF family. In terms of assembly, homotrimer. A divalent metal cation is required as a cofactor.

The catalysed reaction is 4-CDP-2-C-methyl-D-erythritol 2-phosphate = 2-C-methyl-D-erythritol 2,4-cyclic diphosphate + CMP. The protein operates within isoprenoid biosynthesis; isopentenyl diphosphate biosynthesis via DXP pathway; isopentenyl diphosphate from 1-deoxy-D-xylulose 5-phosphate: step 4/6. Its function is as follows. Involved in the biosynthesis of isopentenyl diphosphate (IPP) and dimethylallyl diphosphate (DMAPP), two major building blocks of isoprenoid compounds. Catalyzes the conversion of 4-diphosphocytidyl-2-C-methyl-D-erythritol 2-phosphate (CDP-ME2P) to 2-C-methyl-D-erythritol 2,4-cyclodiphosphate (ME-CPP) with a corresponding release of cytidine 5-monophosphate (CMP). This is 2-C-methyl-D-erythritol 2,4-cyclodiphosphate synthase from Pseudoalteromonas translucida (strain TAC 125).